The primary structure comprises 342 residues: Platelet-activating factor receptor (342 aa).

At Met-1 to Thr-16 the chain is on the extracellular side. Asn-4 is a glycosylation site (N-linked (GlcNAc...) asparagine). Residues Leu-17–Trp-38 form a helical membrane-spanning segment. Over Val-39–Ile-54 the chain is Cytoplasmic. The helical transmembrane segment at Phe-55–Ile-74 threads the bilayer. Topologically, residues Val-75–Asn-91 are extracellular. Cys-90 and Cys-173 form a disulfide bridge. The chain crosses the membrane as a helical span at residues Leu-92–Tyr-113. Residues Asn-114–Arg-133 are Cytoplasmic-facing. The chain crosses the membrane as a helical span at residues Gly-134–Leu-155. Residues Asp-156–Val-184 lie on the Extracellular side of the membrane. A glycan (N-linked (GlcNAc...) asparagine) is linked at Asn-169. The helical transmembrane segment at Leu-185–Cys-205 threads the bilayer. At Asn-206–Met-233 the chain is on the cytoplasmic side. A helical transmembrane segment spans residues Val-234 to Pro-254. Residues Trp-255–Gln-276 lie on the Extracellular side of the membrane. A helical transmembrane segment spans residues Val-277–Leu-296. Topologically, residues Thr-297 to Tyr-342 are cytoplasmic.

This sequence belongs to the G-protein coupled receptor 1 family. As to quaternary structure, interacts with ARRB1.

It is found in the cell membrane. In terms of biological role, receptor for platelet activating factor, a chemotactic phospholipid mediator that possesses potent inflammatory, smooth-muscle contractile and hypotensive activity. Seems to mediate its action via a G protein that activates a phosphatidylinositol-calcium second messenger system. This chain is Platelet-activating factor receptor, found in Capra hircus (Goat).